The sequence spans 232 residues: TIR domain-containing adapter molecule 2 (232 aa).

The segment covering 1–39 has biased composition (basic and acidic residues); sequence MGVGKSKLDKCPLSWHKKDSVDADQDGHESDSKNSEEAC. A disordered region spans residues 1 to 70; that stretch reads MGVGKSKLDK…EAKGAGPEEQ (70 aa). Gly2 carries the N-myristoyl glycine lipid modification. In terms of domain architecture, TIR spans 74 to 226; sequence EFLKFVILHA…SIWKETRSVS (153 aa). Tyr164 carries the post-translational modification Phosphotyrosine.

In terms of assembly, homodimer. Interacts with TLR4, TICAM1, IRF3 and IRF7 in response to LPS. Interacts with IL1R1, IL1RAP, IRAK2, IRAK3 and TRAF6. Interacts with protein kinase-inactive mutants of IRAK1 and IRAK4. Isoform 1 interacts with isoform 2; the interaction occurs in late endosomes and disrupts the interaction between isoform 1 and TICAM1. Interacts with MYD88; the interaction decreases after IL-18 stimulation in a time-dependent manner. Interacts with IL18R1 and IL18RAP. Interacts with TLR2. Interacts with RAB11FIP2. Post-translationally, myristoylated. Required for membrane association which is critical for its ability to initiate efficient signaling. Phosphorylated by PRKCE in response to LPS. Phosphorylation is essential for its function. It is depleted from the membrane upon phosphorylation. Tyrosine phosphorylation is inhibited by phosphatase PTPN4.

It localises to the cytoplasm. Its subcellular location is the golgi apparatus. It is found in the cell membrane. The protein resides in the early endosome. The protein localises to the late endosome. It localises to the endoplasmic reticulum. Its subcellular location is the cell projection. It is found in the phagocytic cup. Functionally, functions as a sorting adapter in different signaling pathways to facilitate downstream signaling leading to type I interferon induction. In TLR4 signaling, physically bridges TLR4 and TICAM1 and functionally transmits signal to TICAM1 in early endosomes after endocytosis of TLR4. In TLR2 signaling, physically bridges TLR2 and MYD88 and is required for the TLR2-dependent movement of MYD88 to endosomes following ligand engagement. Involved in IL-18 signaling and is proposed to function as a sorting adapter for MYD88 in IL-18 signaling during adaptive immune response. Forms a complex with RAB11FIP2 that is recruited to the phagosomes to promote the activation of the actin-regulatory GTPases RAC1 and CDC42 and subsequent phagocytosis of Gram-negative bacteria. This chain is TIR domain-containing adapter molecule 2 (Ticam2), found in Mus musculus (Mouse).